Here is a 358-residue protein sequence, read N- to C-terminus: Peptide chain release factor 1 (358 aa).

At Gln-233 the chain carries N5-methylglutamine.

It belongs to the prokaryotic/mitochondrial release factor family. Methylated by PrmC. Methylation increases the termination efficiency of RF1.

The protein localises to the cytoplasm. Peptide chain release factor 1 directs the termination of translation in response to the peptide chain termination codons UAG and UAA. The sequence is that of Peptide chain release factor 1 from Staphylococcus aureus (strain MSSA476).